The chain runs to 479 residues: UDP-N-acetylmuramoyl-L-alanyl-D-glutamate--2,6-diaminopimelate ligase (479 aa).

Residue S21 coordinates UDP-N-acetyl-alpha-D-muramoyl-L-alanyl-D-glutamate. An ATP-binding site is contributed by 98-104 (GTNGKSS). Residues 144–145 (TT), S171, Q177, and R179 each bind UDP-N-acetyl-alpha-D-muramoyl-L-alanyl-D-glutamate. K211 bears the N6-carboxylysine mark. Meso-2,6-diaminopimelate contacts are provided by residues R372, 396 to 399 (DNPR), G446, and E450. Residues 396–399 (DNPR) carry the Meso-diaminopimelate recognition motif motif.

It belongs to the MurCDEF family. MurE subfamily. The cofactor is Mg(2+). In terms of processing, carboxylation is probably crucial for Mg(2+) binding and, consequently, for the gamma-phosphate positioning of ATP.

It is found in the cytoplasm. It catalyses the reaction UDP-N-acetyl-alpha-D-muramoyl-L-alanyl-D-glutamate + meso-2,6-diaminopimelate + ATP = UDP-N-acetyl-alpha-D-muramoyl-L-alanyl-gamma-D-glutamyl-meso-2,6-diaminopimelate + ADP + phosphate + H(+). The protein operates within cell wall biogenesis; peptidoglycan biosynthesis. In terms of biological role, catalyzes the addition of meso-diaminopimelic acid to the nucleotide precursor UDP-N-acetylmuramoyl-L-alanyl-D-glutamate (UMAG) in the biosynthesis of bacterial cell-wall peptidoglycan. This chain is UDP-N-acetylmuramoyl-L-alanyl-D-glutamate--2,6-diaminopimelate ligase, found in Rickettsia rickettsii.